We begin with the raw amino-acid sequence, 148 residues long: 3-hydroxyacyl-[acyl-carrier-protein] dehydratase FabZ (148 aa).

Residue H47 is part of the active site.

This sequence belongs to the thioester dehydratase family. FabZ subfamily.

The protein resides in the cytoplasm. The enzyme catalyses a (3R)-hydroxyacyl-[ACP] = a (2E)-enoyl-[ACP] + H2O. Functionally, involved in unsaturated fatty acids biosynthesis. Catalyzes the dehydration of short chain beta-hydroxyacyl-ACPs and long chain saturated and unsaturated beta-hydroxyacyl-ACPs. The sequence is that of 3-hydroxyacyl-[acyl-carrier-protein] dehydratase FabZ from Hydrogenobaculum sp. (strain Y04AAS1).